The following is a 572-amino-acid chain: MSFKMDREEYAQHYGPTVGDSVRLGDTNLFAAIEKDFTVYGQESKFGGGKVLRDGMGVSATETRDNPSVVDTIITGATIIDYTGIIKADIGIRDGKIVAIGRGGNPDTMDNVDFVVGASTEAIAAEGLIVTAGGIDLHVHYISADLPEFGMDNGITTLFGGGTGPADGSNATTCTPGKFHITRMLQAVDDMPANFGFLAKGVGSETEVVEEQIKAGAAGIKTHEDWGATYAGIDNSLKVADKYDVSFAVHTDSLNEGGFMENTLESFQGRTVHTFHTEGSGGGHAPDIMVFAGKENILPSSTNPTNPYTTNAIGELLDMVMVCHHLDPKIPEDVSFAESRVRKQTVAAEDVLHDMGALSIMTSDAMAMGRVGEVVMRCWQLADKMKAQRGPLEGDSEFNDNNRIKRYVAKYTINPAITNGIADYIGSVEVGKFADLVIWEPAQFGAKPKLVLKGGMLTYGVMGDAGSSLPTPQPRIMRKLYGAYGQAVHKTNITFVSQYAYDHGIKEEIGLNKIVLPVKNTRNLTKRDMKLNDYAPKTIRIDPQTFDVFIDDELVTCEPIHTTSLSQRYFLF.

In terms of domain architecture, Urease spans 133-572 (GGIDLHVHYI…TSLSQRYFLF (440 aa)). Histidine 138, histidine 140, and lysine 221 together coordinate Ni(2+). The residue at position 221 (lysine 221) is an N6-carboxylysine. Histidine 223 serves as a coordination point for substrate. Histidine 250 and histidine 276 together coordinate Ni(2+). The active-site Proton donor is histidine 324. Aspartate 364 lines the Ni(2+) pocket.

This sequence belongs to the metallo-dependent hydrolases superfamily. Urease alpha subunit family. Heterotrimer of UreA (gamma), UreB (beta) and UreC (alpha) subunits. Three heterotrimers associate to form the active enzyme. It depends on Ni cation as a cofactor. In terms of processing, carboxylation allows a single lysine to coordinate two nickel ions.

The protein localises to the cytoplasm. It carries out the reaction urea + 2 H2O + H(+) = hydrogencarbonate + 2 NH4(+). It functions in the pathway nitrogen metabolism; urea degradation; CO(2) and NH(3) from urea (urease route): step 1/1. The chain is Urease subunit alpha from Streptococcus thermophilus (strain CNRZ 1066).